We begin with the raw amino-acid sequence, 299 residues long: Acetyl-hydrolase (299 aa).

Positions 73–75 (HGG) match the Involved in the stabilization of the negatively charged intermediate by the formation of the oxyanion hole motif. Catalysis depends on residues S143, E237, and H267.

Belongs to the 'GDXG' lipolytic enzyme family.

It participates in secondary metabolite biosynthesis; bialaphos biosynthesis. Functionally, this protein removes the N-acetyl group from bialaphos as one of the final steps of biosynthesis of phosphinothricin tripeptide (PTT), also known as bialaphos (BA), a natural-product antibiotic and potent herbicide. In Streptomyces hygroscopicus, this protein is Acetyl-hydrolase (bah).